A 488-amino-acid chain; its full sequence is N-succinylglutamate 5-semialdehyde dehydrogenase (488 aa).

G221–G226 contacts NAD(+). Active-site residues include E244 and C278.

It belongs to the aldehyde dehydrogenase family. AstD subfamily.

The enzyme catalyses N-succinyl-L-glutamate 5-semialdehyde + NAD(+) + H2O = N-succinyl-L-glutamate + NADH + 2 H(+). It functions in the pathway amino-acid degradation; L-arginine degradation via AST pathway; L-glutamate and succinate from L-arginine: step 4/5. In terms of biological role, catalyzes the NAD-dependent reduction of succinylglutamate semialdehyde into succinylglutamate. This chain is N-succinylglutamate 5-semialdehyde dehydrogenase, found in Pseudomonas syringae pv. tomato (strain ATCC BAA-871 / DC3000).